We begin with the raw amino-acid sequence, 215 residues long: Adenylate kinase (215 aa).

Residue 10–15 (GAGKGT) coordinates ATP. The tract at residues 30–58 (STGDMLREAKRSGTLEKRYLDIMDSGGLL) is NMP. Residues Thr31, Arg36, 56-58 (GLL), 84-87 (GFPR), and Gln91 each bind AMP. The LID stretch occupies residues 128–158 (HRRTDKRSGQIYHLVYNPPPPGAELEHRADD). Residues Arg129 and 138–139 (IY) each bind ATP. Positions 155 and 166 each coordinate AMP. ATP is bound at residue Gly194.

It belongs to the adenylate kinase family. As to quaternary structure, monomer.

The protein resides in the cytoplasm. The enzyme catalyses AMP + ATP = 2 ADP. The protein operates within purine metabolism; AMP biosynthesis via salvage pathway; AMP from ADP: step 1/1. In terms of biological role, catalyzes the reversible transfer of the terminal phosphate group between ATP and AMP. Plays an important role in cellular energy homeostasis and in adenine nucleotide metabolism. The sequence is that of Adenylate kinase from Sorangium cellulosum (strain So ce56) (Polyangium cellulosum (strain So ce56)).